A 427-amino-acid chain; its full sequence is Kallistatin (427 aa).

Residues 1–20 (MHLIDYLLLLLVGLLALSHG) form the signal peptide. Residues Asn33, Asn108, Asn157, and Asn238 are each glycosylated (N-linked (GlcNAc...) asparagine).

This sequence belongs to the serpin family. Monomer and some homodimers.

It is found in the secreted. In terms of biological role, inhibits human amidolytic and kininogenase activities of tissue kallikrein. The polypeptide is Kallistatin (SERPINA4) (Pongo abelii (Sumatran orangutan)).